A 106-amino-acid chain; its full sequence is Large ribosomal subunit protein uL24 (106 aa).

Belongs to the universal ribosomal protein uL24 family. In terms of assembly, part of the 50S ribosomal subunit.

Its function is as follows. One of two assembly initiator proteins, it binds directly to the 5'-end of the 23S rRNA, where it nucleates assembly of the 50S subunit. In terms of biological role, one of the proteins that surrounds the polypeptide exit tunnel on the outside of the subunit. This Polaromonas naphthalenivorans (strain CJ2) protein is Large ribosomal subunit protein uL24.